We begin with the raw amino-acid sequence, 164 residues long: Lipoprotein signal peptidase (164 aa).

The next 3 helical transmembrane spans lie at Trp12 to Gln32, Trp70 to Leu90, and Ala102 to Val122. Active-site residues include Asp123 and Asp141. The helical transmembrane segment at Phe137–Leu157 threads the bilayer.

The protein belongs to the peptidase A8 family.

Its subcellular location is the cell inner membrane. It carries out the reaction Release of signal peptides from bacterial membrane prolipoproteins. Hydrolyzes -Xaa-Yaa-Zaa-|-(S,diacylglyceryl)Cys-, in which Xaa is hydrophobic (preferably Leu), and Yaa (Ala or Ser) and Zaa (Gly or Ala) have small, neutral side chains.. The protein operates within protein modification; lipoprotein biosynthesis (signal peptide cleavage). This protein specifically catalyzes the removal of signal peptides from prolipoproteins. This Shigella boydii serotype 4 (strain Sb227) protein is Lipoprotein signal peptidase.